The sequence spans 1012 residues: DNA polymerase catalytic subunit (1012 aa).

The protein belongs to the DNA polymerase type-B family.

Its subcellular location is the host nucleus. It catalyses the reaction DNA(n) + a 2'-deoxyribonucleoside 5'-triphosphate = DNA(n+1) + diphosphate. Replicates viral genomic DNA. The sequence is that of DNA polymerase catalytic subunit (U38) from Human herpesvirus 6B (strain Z29) (HHV-6 variant B).